Consider the following 697-residue polypeptide: Polyribonucleotide nucleotidyltransferase (697 aa).

Positions 487 and 493 each coordinate Mg(2+). The KH domain occupies 554–613; sequence PRIETIQIKPSKIAVVIGPGGKQIRAIIEQTGVQIDIDDTGLVNIAAIDLVSIEKAKAII. The region spanning 623–691 is the S1 motif domain; that stretch reads GRIYSGKAIS…ERGQIKLSRK (69 aa).

The protein belongs to the polyribonucleotide nucleotidyltransferase family. It depends on Mg(2+) as a cofactor.

It localises to the cytoplasm. The catalysed reaction is RNA(n+1) + phosphate = RNA(n) + a ribonucleoside 5'-diphosphate. In terms of biological role, involved in mRNA degradation. Catalyzes the phosphorolysis of single-stranded polyribonucleotides processively in the 3'- to 5'-direction. This Protochlamydia amoebophila (strain UWE25) protein is Polyribonucleotide nucleotidyltransferase.